Consider the following 396-residue polypeptide: Cellular tumor antigen p53 (396 aa).

Residues Met-1–Phe-44 are transcription activation (acidic). Residues Ala-63–Ser-89 are disordered. Residues Thr-77 to Ser-89 show a composition bias toward low complexity. The DNA-binding element occupies Asp-90–Gln-281. Zn(2+) is bound by residues Cys-164, His-167, Cys-227, and Cys-231. An interaction with DNA region spans residues Arg-262–Arg-269. The Bipartite nuclear localization signal signature appears at Lys-297–Lys-317. Positions Lys-301 to Val-322 are disordered. The segment at Asp-325–Val-356 is oligomerization. The Nuclear export signal motif lies at Glu-339–Leu-350. The segment at Lys-369–Lys-392 is basic (repression of DNA-binding).

Belongs to the p53 family. Binds DNA as a homotetramer. Zn(2+) serves as cofactor.

The protein localises to the cytoplasm. The protein resides in the nucleus. Multifunctional transcription factor that induces cell cycle arrest, DNA repair or apoptosis upon binding to its target DNA sequence. Acts as a tumor suppressor in many tumor types; induces growth arrest or apoptosis depending on the physiological circumstances and cell type. Negatively regulates cell division by controlling expression of a set of genes required for this process. One of the activated genes is an inhibitor of cyclin-dependent kinases. Apoptosis induction seems to be mediated either by stimulation of BAX and FAS antigen expression, or by repression of Bcl-2 expression. In Oncorhynchus mykiss (Rainbow trout), this protein is Cellular tumor antigen p53 (tp53).